Reading from the N-terminus, the 490-residue chain is Membrane-bound lytic murein transglycosylase F (490 aa).

The signal sequence occupies residues 1–32; the sequence is MFALTAYRLRCAAWLLATGIFLLLAGCSEAKA. A non-LT domain region spans residues 33 to 269; that stretch reads PTALERVQKE…RLKDRYYGHV (237 aa). Residues 270–490 are LT domain; the sequence is DVLGYVGAYT…PDDDEGDGKL (221 aa). The active site involves E316. The disordered stretch occupies residues 467–490; that stretch reads AESGLHLPGVNKTRPDDDEGDGKL.

In the N-terminal section; belongs to the bacterial solute-binding protein 3 family. It in the C-terminal section; belongs to the transglycosylase Slt family.

It localises to the cell outer membrane. The enzyme catalyses Exolytic cleavage of the (1-&gt;4)-beta-glycosidic linkage between N-acetylmuramic acid (MurNAc) and N-acetylglucosamine (GlcNAc) residues in peptidoglycan, from either the reducing or the non-reducing ends of the peptidoglycan chains, with concomitant formation of a 1,6-anhydrobond in the MurNAc residue.. Its function is as follows. Murein-degrading enzyme that degrades murein glycan strands and insoluble, high-molecular weight murein sacculi, with the concomitant formation of a 1,6-anhydromuramoyl product. Lytic transglycosylases (LTs) play an integral role in the metabolism of the peptidoglycan (PG) sacculus. Their lytic action creates space within the PG sacculus to allow for its expansion as well as for the insertion of various structures such as secretion systems and flagella. The polypeptide is Membrane-bound lytic murein transglycosylase F (Pseudomonas paraeruginosa (strain DSM 24068 / PA7) (Pseudomonas aeruginosa (strain PA7))).